A 390-amino-acid polypeptide reads, in one-letter code: GTPase Obg (390 aa).

Residues 1–159 (MKFVDEATIL…RELTLELLLL (159 aa)) enclose the Obg domain. Positions 128–147 (SRFKSSVNRAPRQKTNGTKG) are disordered. Over residues 129-145 (RFKSSVNRAPRQKTNGT) the composition is skewed to polar residues. In terms of domain architecture, OBG-type G spans 160–333 (ADVGMLGLPN…LCWDVMNFLK (174 aa)). GTP is bound by residues 166–173 (GLPNAGKS), 191–195 (FTTLV), 213–216 (DIPG), 283–286 (NKVD), and 314–316 (SAA). Residues Ser-173 and Thr-193 each coordinate Mg(2+).

It belongs to the TRAFAC class OBG-HflX-like GTPase superfamily. OBG GTPase family. As to quaternary structure, monomer. Mg(2+) is required as a cofactor.

The protein resides in the cytoplasm. Functionally, an essential GTPase which binds GTP, GDP and possibly (p)ppGpp with moderate affinity, with high nucleotide exchange rates and a fairly low GTP hydrolysis rate. Plays a role in control of the cell cycle, stress response, ribosome biogenesis and in those bacteria that undergo differentiation, in morphogenesis control. This Pectobacterium atrosepticum (strain SCRI 1043 / ATCC BAA-672) (Erwinia carotovora subsp. atroseptica) protein is GTPase Obg.